Here is a 109-residue protein sequence, read N- to C-terminus: Ribulose bisphosphate carboxylase small subunit (109 aa).

This sequence belongs to the RuBisCO small chain family. Heterohexadecamer of 8 large and 8 small subunits.

The protein localises to the carboxysome. RuBisCO catalyzes two reactions: the carboxylation of D-ribulose 1,5-bisphosphate, the primary event in carbon dioxide fixation, as well as the oxidative fragmentation of the pentose substrate in the photorespiration process. Both reactions occur simultaneously and in competition at the same active site. Although the small subunit is not catalytic it is essential for maximal activity. This chain is Ribulose bisphosphate carboxylase small subunit, found in Prochlorothrix hollandica.